An 805-amino-acid chain; its full sequence is Sucrose synthase (805 aa).

Positions 275 to 752 (MVFNVVILSP…GLKRIQEKYT (478 aa)) are GT-B glycosyltransferase.

This sequence belongs to the glycosyltransferase 1 family. Plant sucrose synthase subfamily.

The catalysed reaction is an NDP-alpha-D-glucose + D-fructose = a ribonucleoside 5'-diphosphate + sucrose + H(+). In terms of biological role, sucrose-cleaving enzyme that provides UDP-glucose and fructose for various metabolic pathways. The polypeptide is Sucrose synthase (Solanum tuberosum (Potato)).